A 124-amino-acid polypeptide reads, in one-letter code: Large ribosomal subunit protein bL20 (124 aa).

It belongs to the bacterial ribosomal protein bL20 family.

In terms of biological role, binds directly to 23S ribosomal RNA and is necessary for the in vitro assembly process of the 50S ribosomal subunit. It is not involved in the protein synthesizing functions of that subunit. The polypeptide is Large ribosomal subunit protein bL20 (Ehrlichia canis (strain Jake)).